Here is a 468-residue protein sequence, read N- to C-terminus: ATP synthase subunit beta (468 aa).

155–162 (GGAGVGKT) serves as a coordination point for ATP.

The protein belongs to the ATPase alpha/beta chains family. F-type ATPases have 2 components, CF(1) - the catalytic core - and CF(0) - the membrane proton channel. CF(1) has five subunits: alpha(3), beta(3), gamma(1), delta(1), epsilon(1). CF(0) has three main subunits: a(1), b(2) and c(9-12). The alpha and beta chains form an alternating ring which encloses part of the gamma chain. CF(1) is attached to CF(0) by a central stalk formed by the gamma and epsilon chains, while a peripheral stalk is formed by the delta and b chains.

It is found in the cell membrane. It catalyses the reaction ATP + H2O + 4 H(+)(in) = ADP + phosphate + 5 H(+)(out). In terms of biological role, produces ATP from ADP in the presence of a proton gradient across the membrane. The catalytic sites are hosted primarily by the beta subunits. The polypeptide is ATP synthase subunit beta (Streptococcus pyogenes serotype M49 (strain NZ131)).